Consider the following 349-residue polypeptide: Putative ABC transporter permease protein MJ0087 (349 aa).

9 helical membrane-spanning segments follow: residues 15–35 (IIFG…ALCV), 69–89 (IFAA…MQCI), 100–120 (MGIS…FGFG), 135–155 (MITI…LLLA), 166–186 (ILAG…IQYF), 206–226 (AIWT…IYFM), 254–274 (LIGM…LGII), 295–315 (FLIP…DTFA), and 318–338 (IIAP…APMF).

Belongs to the binding-protein-dependent transport system permease family. FecCD subfamily.

Its subcellular location is the cell membrane. Functionally, probably part of a binding-protein-dependent transport system. Probably responsible for the translocation of the substrate across the membrane. The protein is Putative ABC transporter permease protein MJ0087 of Methanocaldococcus jannaschii (strain ATCC 43067 / DSM 2661 / JAL-1 / JCM 10045 / NBRC 100440) (Methanococcus jannaschii).